Consider the following 70-residue polypeptide: Eglin C (70 aa).

It belongs to the protease inhibitor I13 (potato type I serine protease inhibitor) family.

In terms of biological role, inhibits both elastase and cathepsin G. The polypeptide is Eglin C (Hirudo medicinalis (Medicinal leech)).